Consider the following 58-residue polypeptide: ATP synthase subunit a (58 aa).

The next 2 membrane-spanning stretches (helical) occupy residues 11 to 31 (EIFY…LTGL) and 35 to 55 (VAIL…NDAI).

Belongs to the ATPase A chain family. F-type ATPases have 2 components, CF(1) - the catalytic core - and CF(0) - the membrane proton channel. CF(1) has five subunits: alpha(3), beta(3), gamma(1), delta(1), epsilon(1). CF(0) has three main subunits: a, b and c.

The protein resides in the mitochondrion inner membrane. In terms of biological role, mitochondrial membrane ATP synthase (F(1)F(0) ATP synthase or Complex V) produces ATP from ADP in the presence of a proton gradient across the membrane which is generated by electron transport complexes of the respiratory chain. F-type ATPases consist of two structural domains, F(1) - containing the extramembraneous catalytic core and F(0) - containing the membrane proton channel, linked together by a central stalk and a peripheral stalk. During catalysis, ATP synthesis in the catalytic domain of F(1) is coupled via a rotary mechanism of the central stalk subunits to proton translocation. Key component of the proton channel; it may play a direct role in the translocation of protons across the membrane. In Brassica tournefortii (Wild turnip), this protein is ATP synthase subunit a (ATP6).